Consider the following 686-residue polypeptide: DNA ligase 2 (686 aa).

NAD(+)-binding positions include 37 to 41, 86 to 87, and Glu121; these read DDEYD and SL. The active-site N6-AMP-lysine intermediate is Lys123. Residues Arg144, Glu179, Lys295, and Lys319 each coordinate NAD(+). Zn(2+)-binding residues include Cys413, Cys416, Cys431, and Cys436. Positions 593-681 constitute a BRCT domain; the sequence is VRGEQLAGLN…GVQLPGVQAS (89 aa).

It belongs to the NAD-dependent DNA ligase family. LigA subfamily. Mg(2+) serves as cofactor. Requires Mn(2+) as cofactor.

It catalyses the reaction NAD(+) + (deoxyribonucleotide)n-3'-hydroxyl + 5'-phospho-(deoxyribonucleotide)m = (deoxyribonucleotide)n+m + AMP + beta-nicotinamide D-nucleotide.. In terms of biological role, DNA ligase that catalyzes the formation of phosphodiester linkages between 5'-phosphoryl and 3'-hydroxyl groups in double-stranded DNA using NAD as a coenzyme and as the energy source for the reaction. It is essential for DNA replication and repair of damaged DNA. In Deinococcus deserti (strain DSM 17065 / CIP 109153 / LMG 22923 / VCD115), this protein is DNA ligase 2.